The following is a 1336-amino-acid chain: SH3 domain and tetratricopeptide repeat-containing protein 1 (1336 aa).

The residue at position 1 (methionine 1) is an N-acetylmethionine. Disordered stretches follow at residues 1–76 (MENL…PPCQ) and 225–266 (TGPR…SEEV). Gly residues predominate over residues 18 to 27 (GPVGPSGGGS). The segment covering 46–61 (AGPEEAKAPVRGDEAP) has biased composition (basic and acidic residues). 2 stretches are compositionally biased toward low complexity: residues 62-74 (PARV…GTPP) and 247-266 (EAAP…SEEV). Positions 305–368 (MAVGLASALA…RSSLISMQGP (64 aa)) constitute an SH3 domain. TPR repeat units lie at residues 560–593 (ARLC…LEGS), 601–634 (VAVY…LLGT), 665–698 (ARAC…HRDS), 786–819 (GPLY…SAIA), 863–896 (GVIA…ARDL), 946–979 (THVL…AVEM), 1027–1063 (GQLL…FIDL), and 1192–1225 (RVAY…CNSP). The residue at position 1248 (tyrosine 1248) is a Phosphotyrosine. A TPR 9 repeat occupies 1277–1311 (LKIYTRLATIYHNFLLDREKSLFFYQKARTFATEL).

This Homo sapiens (Human) protein is SH3 domain and tetratricopeptide repeat-containing protein 1 (SH3TC1).